The chain runs to 468 residues: Argininosuccinate lyase (468 aa).

The protein belongs to the lyase 1 family. Argininosuccinate lyase subfamily.

It localises to the cytoplasm. It carries out the reaction 2-(N(omega)-L-arginino)succinate = fumarate + L-arginine. It participates in amino-acid biosynthesis; L-arginine biosynthesis; L-arginine from L-ornithine and carbamoyl phosphate: step 3/3. The protein is Argininosuccinate lyase of Hahella chejuensis (strain KCTC 2396).